The chain runs to 423 residues: Glycine amidinotransferase, mitochondrial (423 aa).

Residues methionine 1–threonine 43 constitute a mitochondrion transit peptide. Phosphoserine is present on residues serine 46 and serine 49. Aspartate 170 contacts arginine. Active-site residues include aspartate 254 and histidine 303. Arginine is bound by residues aspartate 305, arginine 322, serine 354, and serine 355. Lysine 385 is modified (N6-acetyllysine). The active-site Amidino-cysteine intermediate is the cysteine 407.

Belongs to the amidinotransferase family. In terms of assembly, homodimer. Kidney. Expressed biallelically in placenta.

Its subcellular location is the mitochondrion inner membrane. The enzyme catalyses L-arginine + glycine = guanidinoacetate + L-ornithine. It catalyses the reaction 4-aminobutanoate + L-arginine = 4-guanidinobutanoate + L-ornithine. It carries out the reaction beta-alanine + L-arginine = 3-guanidinopropanoate + L-ornithine. The catalysed reaction is taurine + L-arginine = taurocyamine + L-ornithine. Its pathway is amine and polyamine biosynthesis; creatine biosynthesis; creatine from L-arginine and glycine: step 1/2. Its function is as follows. Transamidinase that catalyzes the transfer of the amidino group of L-arginine onto the amino moiety of acceptor metabolites such as glycine, beta-alanine, gamma-aminobutyric acid (GABA) and taurine yielding the corresponding guanidine derivatives. Catalyzes the rate-limiting step of creatine biosynthesis, namely the transfer of the amidino group from L-arginine to glycine to generate guanidinoacetate, which is then methylated by GAMT to form creatine. Provides creatine as a source for ATP generation in tissues with high energy demands, in particular skeletal muscle, heart and brain. This is Glycine amidinotransferase, mitochondrial (GATM) from Sus scrofa (Pig).